The sequence spans 893 residues: Probable disease resistance protein At1g62630 (893 aa).

The stretch at 24-68 (GSYTHNLEKNLVALETTMEELKAKRDDLLRRLKREEDRGLQRLSE) forms a coiled coil. One can recognise an NB-ARC domain in the interval 136-440 (TEQASTSAFE…CEEIIDGSEG (305 aa)). An ATP-binding site is contributed by 179-186 (GMGGVGKT). 6 LRR repeats span residues 516–537 (VVRRMSLMGNKIHHLVGSYECM), 538–559 (ELTTLLLGEGEYGSIWRWSEIK), 571–593 (KLAVLDLSHNQSLFELPEEISNL), 595–617 (SLKYLNLSHTGIRHLSKGIQELK), 618–640 (KIIHLNLEHTSKLESIDGISSLH), and 641–663 (NLKVLKLYGSRLPWDLNTVKELE).

It belongs to the disease resistance NB-LRR family.

Functionally, probable disease resistance protein. The polypeptide is Probable disease resistance protein At1g62630 (Arabidopsis thaliana (Mouse-ear cress)).